We begin with the raw amino-acid sequence, 101 residues long: Small ribosomal subunit protein uS14 (101 aa).

The disordered stretch occupies residues 46 to 72 (FELNRQPRDASPVRVRNRDSRDGRPRG). The span at 61-70 (RNRDSRDGRP) shows a compositional bias: basic and acidic residues.

The protein belongs to the universal ribosomal protein uS14 family. In terms of assembly, part of the 30S ribosomal subunit. Contacts proteins S3 and S10.

In terms of biological role, binds 16S rRNA, required for the assembly of 30S particles and may also be responsible for determining the conformation of the 16S rRNA at the A site. This chain is Small ribosomal subunit protein uS14, found in Corynebacterium diphtheriae (strain ATCC 700971 / NCTC 13129 / Biotype gravis).